Here is a 254-residue protein sequence, read N- to C-terminus: Cytokine-inducible SH2-containing protein (254 aa).

Positions 82-188 constitute an SH2 domain; that stretch reads WYWGSITASE…ATTPALPTPK (107 aa). Positions 171–195 are disordered; sequence TRSDSPDLATTPALPTPKEDAPGDP. One can recognise an SOCS box domain in the interval 205-253; it reads KLVQPFVRRSSTRSLQHLCRLVINRLVVDVDCLPLPRRMADYLRQYPFQ.

In terms of assembly, stably associated with the tyrosine-phosphorylated IL3 receptor beta chain and tyrosine-phosphorylated EPO receptor (EPOR).

The protein operates within protein modification; protein ubiquitination. SOCS family proteins form part of a classical negative feedback system that regulates cytokine signal transduction. CIS is involved in the negative regulation of cytokines that signal through the JAK-STAT5 pathway such as erythropoietin, prolactin and interleukin 3 (IL3) receptor. Inhibits STAT5 trans-activation by suppressing its tyrosine phosphorylation. May be a substrate recognition component of a SCF-like ECS (Elongin BC-CUL2/5-SOCS-box protein) E3 ubiquitin-protein ligase complex which mediates the ubiquitination and subsequent proteasomal degradation of target proteins. The sequence is that of Cytokine-inducible SH2-containing protein (CISH) from Bos taurus (Bovine).